An 846-amino-acid chain; its full sequence is MCFLRRPGAPASWIWWRMLRQVLRRGLQSFCHRLGLCVSRHPVFFLTVPAVLTITFGLSALNRFQPEGDLERLVAPSHSLAKIERSLASSLFPLDQSKSQLYSDLHTPGRYGRVILLSPTGDNILLQAEGILQTHRAVLEMKDGRNSFIGHQLGGVVEVPNSKDQRVKSARAIQITYYLQTYGSATQDLIGEKWENEFCKLIRKLQEEHQELQLYSLASFSLWRDFHKTSILARSKVLVSLVLILTTATLSSSMKDCLRSKPFLGLLGVLTVCISIITAAGIFFITDGKYNSTLLGIPFFAMGHGTKGVFELLSGWRRTKENLPFKDRIADAYSDVMVTYTMTSSLYFITFGMGASPFTNIEAVKVFCQNMCVSILLNYFYIFSFFGSCLVFAGQLEQNRYHSIFCCKIPSAEYLDRKPVWFQTVMSDGHQQTSHHETNPYQHHFIQHFLREHYNEWITNIYVKPFVVILYLIYASFSFMGCLQISDGANIINLLASDSPSVSYAMVQQKYFSNYSPVIGFYVYEPLEYWNSSVQDDLRRLCSGFTAVSWVEQYYQFLKVSNVSANNKSDFISVLQSSFLKKPEFQHFRNDIIFSKAGDESNIIASRLYLVARTSRDKQKEITEVLEKLRPLSLSKSIRFIVFNPSFVFMDHYSLSVTVPVLIAGFGVLLVLILTFFLVIHPLGNFWLILSVTSIELGVLGLMTLWNVDMDCISILCLIYTLNFAIDHCAPLLFTFVLATEHTRTQCIKSSLQDHGTAILQNVTSFLIGLVPLLFVPSNLTFTLFKCLLLTGGCTLLHCFVILPVFLTFFPPSKKHHKKKKRAKRKEREEIECIEIQENPDHVTTV.

A run of 10 helical transmembrane segments spans residues 41–61 (HPVF…LSAL), 230–250 (SILA…TATL), 265–285 (GLLG…IFFI), 293–313 (TLLG…FELL), 336–356 (VMVT…MGAS), 373–393 (VSIL…LVFA), 465–485 (PFVV…CLQI), 660–680 (PVLI…FLVI), 686–706 (FWLI…MTLW), and 718–738 (LIYT…TFVL). The region spanning 233–392 (ARSKVLVSLV…FSFFGSCLVF (160 aa)) is the SSD domain. The N-linked (GlcNAc...) asparagine glycan is linked to asparagine 762. 2 helical membrane passes run 765–785 (SFLI…FTLF) and 787–807 (CLLL…PVFL).

This sequence belongs to the patched family.

It is found in the membrane. In terms of biological role, could act as a repressor of canonical hedgehog signaling by antagonizing the effects of SMO, as suggested by down-regulation of hedgehog target genes, including GLI1, PTCH1, and PTCH2 in PTCHD4-expressing cells. This Homo sapiens (Human) protein is Patched domain-containing protein 4 (PTCHD4).